The primary structure comprises 551 residues: RCC1 and BTB domain-containing protein 2 (551 aa).

RCC1 repeat units lie at residues Asn-64 to Thr-115, Asp-117 to Ser-169, Gly-171 to Asp-222, Thr-223 to Asp-274, Gly-276 to Thr-326, and Gly-328 to Glu-382. A BTB domain is found at Ala-394 to Pro-457.

As to expression, expressed in testis and heart (at protein level).

Its subcellular location is the cytoplasmic vesicle. The protein localises to the secretory vesicle. The protein resides in the acrosome. In Mus musculus (Mouse), this protein is RCC1 and BTB domain-containing protein 2 (Rcbtb2).